The primary structure comprises 308 residues: Peroxisomal targeting signal 2 receptor (308 aa).

WD repeat units lie at residues 57 to 88, 101 to 132, 145 to 176, 187 to 218, 231 to 262, and 274 to 306; these read DVED…RLFD, EHKA…KLWL, GSNS…KFWD, EIPN…YCYD, GHQL…RIFD, and LHSE…YIWN.

The protein belongs to the WD repeat peroxin-7 family. As to quaternary structure, interacts with PEX21.

It is found in the cytoplasm. It localises to the cytosol. The protein resides in the peroxisome matrix. Functionally, receptor required for the peroxisomal import of proteins containing a C-terminal PTS2-type peroxisomal targeting signal, such as 3-oxoacyl-CoA thiolase. Specifically binds to cargo proteins containing a PTS2 peroxisomal targeting signal in the cytosol. Cargo protein-binding triggers interaction with PEX21 and formation of a ternary complex composed of PEX21 and PEX7 along with PTS2-containing cargo proteins, which is tranlocated into peroxisomes by passing through the PEX13-PEX14 docking complex. In Schizosaccharomyces pombe (strain 972 / ATCC 24843) (Fission yeast), this protein is Peroxisomal targeting signal 2 receptor (pex7).